A 467-amino-acid chain; its full sequence is UDP-N-acetylmuramate--L-alanine ligase (467 aa).

Gly-114–Thr-120 lines the ATP pocket.

It belongs to the MurCDEF family.

Its subcellular location is the cytoplasm. The catalysed reaction is UDP-N-acetyl-alpha-D-muramate + L-alanine + ATP = UDP-N-acetyl-alpha-D-muramoyl-L-alanine + ADP + phosphate + H(+). It participates in cell wall biogenesis; peptidoglycan biosynthesis. Cell wall formation. The chain is UDP-N-acetylmuramate--L-alanine ligase from Bradyrhizobium sp. (strain BTAi1 / ATCC BAA-1182).